The chain runs to 419 residues: E3 ubiquitin-protein ligase RNFT1 (419 aa).

A disordered region spans residues 1 to 120 (MKLRAQFDRG…SGESDLESGE (120 aa)). 2 stretches are compositionally biased toward polar residues: residues 31–44 (EPSS…SLTL) and 72–82 (GSSSGSTNGRG). Residues 84–102 (TSRRMRTASHSHSHTHGHG) are compositionally biased toward basic residues. 6 helical membrane-spanning segments follow: residues 141–161 (FIVI…AVAV), 187–207 (LHCA…FYTF), 217–237 (FFAN…SVGV), 240–260 (FILK…PCPL), 270–290 (YMLI…PLWF), and 303–323 (VGLT…LLAL). Positions 352–403 (IREAGDICPICQADFKQPRVLVCQHIFCEECIAQWLNQERTCPLCRTVITDK) are required for ubiquitin ligase activity and for protection against ER stress-induced cell death. The RING-type zinc finger occupies 359-397 (CPICQADFKQPRVLVCQHIFCEECIAQWLNQERTCPLCR).

It localises to the endoplasmic reticulum membrane. The catalysed reaction is S-ubiquitinyl-[E2 ubiquitin-conjugating enzyme]-L-cysteine + [acceptor protein]-L-lysine = [E2 ubiquitin-conjugating enzyme]-L-cysteine + N(6)-ubiquitinyl-[acceptor protein]-L-lysine.. It participates in protein modification; protein ubiquitination. Its function is as follows. E3 ubiquitin-protein ligase that acts in the endoplasmic reticulum (ER)-associated degradation (ERAD) pathway, which targets misfolded proteins that accumulate in the endoplasmic reticulum (ER) for ubiquitination and subsequent proteasome-mediated degradation. Protects cells from ER stress-induced apoptosis. The protein is E3 ubiquitin-protein ligase RNFT1 (rnft1) of Danio rerio (Zebrafish).